Consider the following 859-residue polypeptide: Catenin delta-1 (859 aa).

Residues 15–44 (SVRAQEAQFELLSRALEEERRHVTAQLDRV) adopt a coiled-coil conformation. The segment at 226–254 (IDGPDYATTGRRGANGGDPRRRLRSYEDP) is disordered. A compositionally biased stretch (basic and acidic residues) spans 243–254 (DPRRRLRSYEDP). 10 ARM repeats span residues 279–317 (APNS…HLSY), 320–359 (EDVK…NLSY), 363–401 (RENK…VTGT), 402–446 (LWNL…RVEG), 464–503 (LRNI…LVDS), 513–552 (LRNI…VRRG), 574–614 (AQGY…NLCA), 621–660 (RCIR…NLCG), 661–700 (DNRN…CVIN), and 701–746 (TIHE…GFCL).

This sequence belongs to the beta-catenin family. As to quaternary structure, interacts with C-cadherin and with zbtb33. As to expression, ubiquitously expressed.

It localises to the cell junction. Its subcellular location is the adherens junction. The protein localises to the cytoplasm. The protein resides in the nucleus. It is found in the cell membrane. Its function is as follows. Key regulator of cell-cell adhesion that associates with and regulates the cell adhesion properties of both C-, E- and N-cadherins, being critical for their surface stability. Beside cell-cell adhesion, regulates gene transcription through several transcription factors including ZBTB33/Kaiso2 and GLIS2, and the activity of Rho family GTPases and downstream cytoskeletal dynamics. Implicated both in cell transformation by SRC and in ligand-induced receptor signaling through the EGF, PDGF, CSF-1 and ERBB2 receptors. Required for gastrulation, axial elongation and development of the craniofacial skeleton and eye. This Xenopus laevis (African clawed frog) protein is Catenin delta-1 (ctnnd1).